The sequence spans 290 residues: Inositol monophosphatase 2 (290 aa).

Residues glutamate 83, aspartate 103, isoleucine 105, and aspartate 106 each contribute to the Mg(2+) site. Residue glutamate 83 participates in substrate binding. Residues 105–108 (IDGT), 207–209 (GSS), glutamine 226, and aspartate 233 each bind substrate. Aspartate 233 contributes to the Mg(2+) binding site.

It belongs to the inositol monophosphatase superfamily. As to quaternary structure, homodimer. Mg(2+) is required as a cofactor. Mostly expressed in brain, small intestine, heart, kidney, and spleen (at protein level).

Its subcellular location is the cytoplasm. It carries out the reaction a myo-inositol phosphate + H2O = myo-inositol + phosphate. The catalysed reaction is 1D-myo-inositol 1-phosphate + H2O = myo-inositol + phosphate. The enzyme catalyses 1D-myo-inositol 2-phosphate + H2O = myo-inositol + phosphate. It catalyses the reaction 1D-myo-inositol 3-phosphate + H2O = myo-inositol + phosphate. It carries out the reaction 1D-myo-inositol 4-phosphate + H2O = myo-inositol + phosphate. The catalysed reaction is 1D-myo-inositol 5-phosphate + H2O = myo-inositol + phosphate. The enzyme catalyses 1D-myo-inositol 6-phosphate + H2O = myo-inositol + phosphate. It catalyses the reaction alpha-D-glucose 1-phosphate + H2O = D-glucose + phosphate. It carries out the reaction glycerol 2-phosphate + H2O = glycerol + phosphate. The catalysed reaction is adenosine 2'-phosphate + H2O = adenosine + phosphate. It participates in polyol metabolism; myo-inositol biosynthesis; myo-inositol from D-glucose 6-phosphate: step 2/2. In terms of biological role, phosphatase that can use myo-inositol monophosphates, myo-inositol 1,4-diphosphate, scyllo-inositol-1,4-diphosphate, glucose-1-phosphate, beta-glycerophosphate and 2'-AMP as substrates in vitro. No physiological substrates has been described yet. Has been implicated as the pharmacological target for lithium Li(+) action in brain. In Mus musculus (Mouse), this protein is Inositol monophosphatase 2.